Reading from the N-terminus, the 176-residue chain is Lipocalin-1 (176 aa).

The signal sequence occupies residues 1-19; it reads MMRALLLAIGLGLVAALQA. The cysteines at positions 80 and 171 are disulfide-linked.

Belongs to the calycin superfamily. Lipocalin family. Predominantly monomer. May form homodimer. Interacts with LMBR1L; this interaction mediates the endocytosis of LCN1.

The protein localises to the secreted. Functionally, could play a role in taste reception. Could be necessary for the concentration and delivery of sapid molecules in the gustatory system. Can bind various ligands, with chemical structures ranging from lipids and retinoids to the macrocyclic antibiotic rifampicin and even to microbial siderophores. Exhibits an extremely wide ligand pocket. The protein is Lipocalin-1 (LCN1) of Sus scrofa (Pig).